Here is a 258-residue protein sequence, read N- to C-terminus: 5'-nucleotidase SurE (258 aa).

A divalent metal cation is bound by residues Asp-13, Asp-14, Ser-44, and Asn-92. Residues 237–258 (SPLTAPHSTEHHDALDGIATEF) form a disordered region.

It belongs to the SurE nucleotidase family. Requires a divalent metal cation as cofactor.

The protein localises to the cytoplasm. The catalysed reaction is a ribonucleoside 5'-phosphate + H2O = a ribonucleoside + phosphate. Functionally, nucleotidase that shows phosphatase activity on nucleoside 5'-monophosphates. In Halobacterium salinarum (strain ATCC 29341 / DSM 671 / R1), this protein is 5'-nucleotidase SurE.